Reading from the N-terminus, the 766-residue chain is MRQDKLTGSLRRGGRCLKRQGGGGVGTILSNVLKKRSCISRTAPRLLCTLEPGVDTKLKFTLEPSLGQNGFQQWYDALKAVARLSTGIPKEWRRKVWLTLADHYLHSIAIDWDKTMRFTFNERSNPDDDSMGIQIVKDLHRTGCSSYCGQEAEQDRVVLKRVLLAYARWNKNVGYCQGFNILAALILEVMEGNEGDALKIMIYLIDKVLPESYFVNNLRALSVDMAVFRDLLRLKLPELSQHLDTLQRTANKESGGGYEPPLTNVFTMQWFLTLFATCLPNHTVLKIWDSVFFEGSEIILRVSLAIWAKLGEQIECCETADEFYGTMGRLTQEMLEQDLLQSHELMQTVYSMAPFPFPQLAELREKYTYNITPFPATIKPTSVSGRHSKARDSDDENGPDDEDAVASAVGCLGPLSGLLAPELQKYQKQIKEATEEQTLRSNNIAELSPGAINSCRSEYHAAFNSMMMERMTTDINALKRQYSRIKKKQQQQLHQVYIRADKGPVTSILPSQANSSPVINHLLLGKKMKITNRAAKNAVIHVPGHPGGKISPVPYEDIKTKLNSPWRTHIRVHKKNMPRTKSHLGCGDTVGLIEEQSEGCKASSLGAAEEFPSGRTVTAHSEGSSGDGDGGGSTPRTIEGQSPEPVFGDADVDVAAVQVKLEALELNQRDAAAETEPKVHFPCQRHASELADAPGENQTAIKLLPGSTSKTPIFSPFPSVKPLRKSATARNLGLYGPTERTPNVHFPQMSRGFNKSGIGNSSTKKR.

One can recognise a Rab-GAP TBC domain in the interval 87–295 (GIPKEWRRKV…KIWDSVFFEG (209 aa)). A disordered region spans residues 380–406 (PTSVSGRHSKARDSDDENGPDDEDAVA). The segment covering 393-404 (SDDENGPDDEDA) has biased composition (acidic residues). Positions 422 to 491 (ELQKYQKQIK…YSRIKKKQQQ (70 aa)) form a coiled coil. Disordered stretches follow at residues 603–647 (SSLG…EPVF) and 731–766 (NLGL…TKKR). At Ser-642 the chain carries Phosphoserine. Polar residues predominate over residues 751 to 766 (RGFNKSGIGNSSTKKR).

The protein localises to the cell membrane. Functionally, may act as a GTPase-activating protein for Rab family protein(s). The chain is TBC1 domain family member 30 (Tbc1d30) from Mus musculus (Mouse).